A 783-amino-acid chain; its full sequence is Zinc finger protein 107 (783 aa).

The segment at 76–98 (FQCNKYVKVFDKFSNSNRYKRRH) adopts a C2H2-type 1; atypical zinc-finger fold. 3 C2H2-type zinc fingers span residues 104 to 126 (FKCKECSKSFCVLSQLTQHRRIH), 132 to 154 (YKCEECGKAFNWFSTLTKHKRIH), and 160 to 182 (YKCEECGKAFNQSSQLTRHKIIH). Residue Lys-186 forms a Glycyl lysine isopeptide (Lys-Gly) (interchain with G-Cter in SUMO2) linkage. The segment at 188–210 (NKCEECGKAFKQASHLTIHKIIH) adopts a C2H2-type 5 zinc-finger fold. The C2H2-type 6; atypical zinc-finger motif lies at 216–238 (YKYEECGKVFSQSSHLTTQKILH). The C2H2-type 7 zinc-finger motif lies at 244–266 (YKCKECGKAFNLFSNLTNHKRIH). The C2H2-type 8; atypical zinc-finger motif lies at 272-294 (YKCKECGRAFNISSNLNKQEKIH). A C2H2-type 9; atypical zinc finger spans residues 300–322 (NKCEECDKAFNRSLKLTAHKKIL). 2 C2H2-type zinc fingers span residues 328–350 (YKCEECGKVFNQFSTLTRHKIIH) and 356–378 (YKCKECGKAFNQSSNLTEHKKIH). A C2H2-type 12; atypical zinc finger spans residues 384-406 (YKCEECGKAFNQHSNLINHRKIY). 4 consecutive C2H2-type zinc fingers follow at residues 412 to 434 (YKCEECGKAFNRSSTLTRHKKIH), 440 to 462 (YKCEECDRAFSQSSNLTEHKKIH), 468 to 490 (YKCEECGKAFNRFSTLTKHKRIH), and 496 to 518 (YKCEECGKAFNQSYQLTRHKIVH). A C2H2-type 17; atypical zinc finger spans residues 524–546 (NKCEEFGKAFKQSSHRTIHKIIH). The C2H2-type 18; atypical zinc finger occupies 552–574 (YKCEEHGKVFNQSSNLTTQKIIH). The C2H2-type 19; atypical zinc finger occupies 580 to 602 (YKFEEHGKAFNLFSNITNHKIIY). 5 consecutive C2H2-type zinc fingers follow at residues 608-630 (HKCEECGKAYNRFSNLTIHKRIH), 636-658 (YQCAECGKAFNCSSTLNRHKIIH), 664-686 (YKCKECGKAFNLSSTLTAHKKIH), 692-714 (YKCEECGKAFNQSSNLTTHKKIH), and 720-742 (YKCEECGKSFNQFSSLNIHKIIH). The C2H2-type 25; atypical zinc-finger motif lies at 748-770 (YKCGDYGRAFNLSSNLTTHKKIH).

It belongs to the krueppel C2H2-type zinc-finger protein family. As to expression, expressed in brain, heart, skeletal muscle, kidney and pancreas. Weakly expressed in aorta, liver and lung.

It is found in the nucleus. Its function is as follows. May be involved in transcriptional regulation. The protein is Zinc finger protein 107 (ZNF107) of Homo sapiens (Human).